The sequence spans 462 residues: Alanine racemase (462 aa).

Lys-34 serves as the catalytic Proton acceptor; specific for D-alanine. Residue Lys-34 is modified to N6-(pyridoxal phosphate)lysine. Residues 73 to 132 (ASWHESVFRHCEKNYTVIRRSNPVKNSVSQNFFNYFSGLQQCFAPRNDGSSIHATTPKAL) form a unknown insert region. Substrate is bound at residue Arg-193. Positions 286–332 (DLSNNLSYKEEFEGDTERRTAAYINVREDSSTGSTYKLPLEGGYSRG) constitute an RPE1 insert domain. Tyr-357 (proton acceptor; specific for L-alanine) is an active-site residue. Met-405 contacts substrate.

The protein belongs to the alanine racemase family. Pyridoxal 5'-phosphate is required as a cofactor.

It catalyses the reaction L-alanine = D-alanine. It functions in the pathway amino-acid biosynthesis; D-alanine biosynthesis; D-alanine from L-alanine: step 1/1. Functionally, catalyzes the interconversion of L-alanine and D-alanine. May also act on other amino acids. The chain is Alanine racemase (alr) from Rickettsia felis (strain ATCC VR-1525 / URRWXCal2) (Rickettsia azadi).